Here is a 318-residue protein sequence, read N- to C-terminus: RNA polymerase II transcription factor B subunit 3 (318 aa).

The RING-type zinc finger occupies 13 to 54 (CPLCQADRYLNPNMKLLINPECYHKMCESCVDRIFTTGPAQC).

In terms of assembly, one of the nine subunits forming the core-TFIIH basal transcription factor. Also interacts with skp1 and with the mcs2-mcs6 complex.

Its subcellular location is the cytoplasm. It localises to the nucleus. Acts as a component of the general transcription and DNA repair factor IIH (TFIIH or factor B), which is essential for both basal and activated transcription, and is involved in nucleotide excision repair (NER) of damaged DNA. TFIIH has CTD kinase activity and DNA-dependent ATPase activity, and is essential for polymerase II transcription. The polypeptide is RNA polymerase II transcription factor B subunit 3 (pmh1) (Schizosaccharomyces pombe (strain 972 / ATCC 24843) (Fission yeast)).